A 132-amino-acid chain; its full sequence is Small ribosomal subunit protein uS8c (132 aa).

It belongs to the universal ribosomal protein uS8 family. In terms of assembly, part of the 30S ribosomal subunit.

It localises to the plastid. The protein resides in the chloroplast. In terms of biological role, one of the primary rRNA binding proteins, it binds directly to 16S rRNA central domain where it helps coordinate assembly of the platform of the 30S subunit. In Angiopteris evecta (Mule's foot fern), this protein is Small ribosomal subunit protein uS8c (rps8).